A 353-amino-acid polypeptide reads, in one-letter code: Ferredoxin--NADP reductase 1 (353 aa).

FAD is bound by residues Thr14, Asp33, Gln41, Tyr46, Ala86, Phe121, Asp289, and Thr330.

Belongs to the ferredoxin--NADP reductase type 2 family. Homodimer. FAD is required as a cofactor.

It catalyses the reaction 2 reduced [2Fe-2S]-[ferredoxin] + NADP(+) + H(+) = 2 oxidized [2Fe-2S]-[ferredoxin] + NADPH. This chain is Ferredoxin--NADP reductase 1, found in Christiangramia forsetii (strain DSM 17595 / CGMCC 1.15422 / KT0803) (Gramella forsetii).